Consider the following 331-residue polypeptide: Cilia- and flagella-associated protein 119 (331 aa).

At serine 34 the chain carries Phosphoserine. 2 disordered regions span residues 236-271 and 309-331; these read LWPE…PEPE and SSKL…SKTK. A coiled-coil region spans residues 286–317; sequence VNKELEQLQGLVEERLKASEERLSSKLTALER.

The protein resides in the cell projection. Its subcellular location is the cilium. It localises to the flagellum. The protein localises to the cytoplasmic vesicle. It is found in the secretory vesicle. The protein resides in the acrosome. Its subcellular location is the cytoplasm. The polypeptide is Cilia- and flagella-associated protein 119 (Homo sapiens (Human)).